Reading from the N-terminus, the 163-residue chain is Ubiquitin-like protein 1-ribosomal protein eS31 fusion protein (163 aa).

A Ubiquitin-like domain is found at 1-70; the sequence is MVFVKTLHRT…IYVNLELLGG (70 aa). Residue G70 forms a Glycyl lysine isopeptide (Gly-Lys) (interchain with K-? in acceptor proteins) linkage. A C4-type zinc finger spans residues 115-138; it reads CQQPSCGGGVFMAQHANRHYCGRC.

In the N-terminal section; belongs to the ubiquitin family. It in the C-terminal section; belongs to the eukaryotic ribosomal protein eS31 family.

The polypeptide is Ubiquitin-like protein 1-ribosomal protein eS31 fusion protein (Caenorhabditis elegans).